A 601-amino-acid polypeptide reads, in one-letter code: Glutathione-regulated potassium-efflux system protein KefB (601 aa).

Transmembrane regions (helical) follow at residues Ala-4–Ala-24, Ile-29–Phe-49, Glu-55–Leu-75, Ile-87–Met-107, Phe-111–Ala-131, Val-152–Gly-172, His-177–Gly-197, Phe-207–Ser-227, Leu-230–Leu-250, Ala-262–Leu-282, Leu-284–Ile-304, Met-324–Ala-344, and Ala-356–Ile-376. An RCK N-terminal domain is found at Lys-400–Thr-519.

Belongs to the monovalent cation:proton antiporter 2 (CPA2) transporter (TC 2.A.37) family. KefB subfamily. In terms of assembly, interacts with the regulatory subunit KefG.

Its subcellular location is the cell inner membrane. Pore-forming subunit of a potassium efflux system that confers protection against electrophiles. Catalyzes K(+)/H(+) antiport. The sequence is that of Glutathione-regulated potassium-efflux system protein KefB from Salmonella newport (strain SL254).